Reading from the N-terminus, the 430-residue chain is mRNA cap guanine-N(7) methyltransferase (430 aa).

Residues 1–88 (MALRPEKPVW…YDLEERKKKQ (88 aa)) form a disordered region. A compositionally biased stretch (basic and acidic residues) spans 15–37 (QYDRQYGKLEEPKPPREESKPGD). One can recognise an mRNA cap 0 methyltransferase domain in the interval 136–419 (SPIIKLRNFN…FYTVFAFRKV (284 aa)). 145-146 (NN) lines the mRNA pocket. S-adenosyl-L-methionine-binding residues include Lys-149, Gly-167, Asp-189, Asp-218, Gln-244, and Tyr-249.

Belongs to the class I-like SAM-binding methyltransferase superfamily. mRNA cap 0 methyltransferase family.

The protein localises to the nucleus. The enzyme catalyses a 5'-end (5'-triphosphoguanosine)-ribonucleoside in mRNA + S-adenosyl-L-methionine = a 5'-end (N(7)-methyl 5'-triphosphoguanosine)-ribonucleoside in mRNA + S-adenosyl-L-homocysteine. Functionally, responsible for methylating the 5'-cap structure of mRNAs. The polypeptide is mRNA cap guanine-N(7) methyltransferase (ABD1) (Eremothecium gossypii (strain ATCC 10895 / CBS 109.51 / FGSC 9923 / NRRL Y-1056) (Yeast)).